We begin with the raw amino-acid sequence, 261 residues long: 14-3-3-like protein B (261 aa).

The disordered stretch occupies residues 237-261; the sequence is DIPEDGEDSQKANGTAKFGGGDDAE.

This sequence belongs to the 14-3-3 family.

The chain is 14-3-3-like protein B from Vicia faba (Broad bean).